The chain runs to 543 residues: Probable protein kinase UbiB (543 aa).

The 379-residue stretch at D123 to L501 folds into the Protein kinase domain. ATP is bound by residues L129–V137 and K152. Residue D287 is the Proton acceptor of the active site. A helical transmembrane segment spans residues T517–W539.

The protein belongs to the ABC1 family. UbiB subfamily.

The protein resides in the cell inner membrane. It functions in the pathway cofactor biosynthesis; ubiquinone biosynthesis [regulation]. Its function is as follows. Is probably a protein kinase regulator of UbiI activity which is involved in aerobic coenzyme Q (ubiquinone) biosynthesis. The protein is Probable protein kinase UbiB of Aliivibrio salmonicida (strain LFI1238) (Vibrio salmonicida (strain LFI1238)).